The sequence spans 34 residues: Photosystem II reaction center protein M (34 aa).

The helical transmembrane segment at I5–L25 threads the bilayer.

The protein belongs to the PsbM family. As to quaternary structure, PSII is composed of 1 copy each of membrane proteins PsbA, PsbB, PsbC, PsbD, PsbE, PsbF, PsbH, PsbI, PsbJ, PsbK, PsbL, PsbM, PsbT, PsbX, PsbY, PsbZ, Psb30/Ycf12, at least 3 peripheral proteins of the oxygen-evolving complex and a large number of cofactors. It forms dimeric complexes.

The protein resides in the plastid. It localises to the chloroplast thylakoid membrane. In terms of biological role, one of the components of the core complex of photosystem II (PSII). PSII is a light-driven water:plastoquinone oxidoreductase that uses light energy to abstract electrons from H(2)O, generating O(2) and a proton gradient subsequently used for ATP formation. It consists of a core antenna complex that captures photons, and an electron transfer chain that converts photonic excitation into a charge separation. This subunit is found at the monomer-monomer interface. In Nephroselmis olivacea (Green alga), this protein is Photosystem II reaction center protein M.